Here is a 971-residue protein sequence, read N- to C-terminus: uncharacterized protein (971 aa).

This is an uncharacterized protein from Caenorhabditis elegans.